A 100-amino-acid polypeptide reads, in one-letter code: uncharacterized protein (100 aa).

The helical transmembrane segment at 13–32 (IWSSLNIICLMVTFLNVQLS) threads the bilayer.

The protein resides in the mitochondrion membrane. This is an uncharacterized protein from Schizosaccharomyces pombe (strain 972 / ATCC 24843) (Fission yeast).